Consider the following 277-residue polypeptide: NH(3)-dependent NAD(+) synthetase (277 aa).

Residue 36–43 (GLSGGIDS) participates in ATP binding. Aspartate 42 serves as a coordination point for Mg(2+). Position 118 (arginine 118) interacts with deamido-NAD(+). Threonine 138 contacts ATP. Position 143 (glutamate 143) interacts with Mg(2+). Positions 167 and 189 each coordinate ATP.

It belongs to the NAD synthetase family. As to quaternary structure, homodimer.

It catalyses the reaction deamido-NAD(+) + NH4(+) + ATP = AMP + diphosphate + NAD(+) + H(+). It functions in the pathway cofactor biosynthesis; NAD(+) biosynthesis; NAD(+) from deamido-NAD(+) (ammonia route): step 1/1. Functionally, catalyzes the ATP-dependent amidation of deamido-NAD to form NAD. Uses ammonia as a nitrogen source. The polypeptide is NH(3)-dependent NAD(+) synthetase (Pelodictyon phaeoclathratiforme (strain DSM 5477 / BU-1)).